The sequence spans 475 residues: MPLTCAERHIFGKSAPISRICAVELTSVAHIREVGITAADMCAYAWHMETTLDGEQVLSDEGYNAFDEERWAPEPPKSKSRTAFERDRARLIHSSALRRLGAKSQILIAGTDDFARTRLTHTLEVAQIGRQIGALLGCDPDVVDCACLAHDLGHPPFGHNGERALADIAGNIGGFEGNAQTMRILTRLEPKIFHPDGRSAGVNLTRAALDAAVKYPWTLAEADRHPKGERSKKFCVYPDDEPVFRWLKIGAPQAAKPMECQIMDLSDDIAYSVHDVEDSIATGAFDPIVLADPKMLDHIIEQTRAWYGAKWDADKLLAAFMRLRREHLFPAHFNGSRESLAQLKNITSDLIGRFCWSVETATRDTYGPGPLTRYSSNIVIPEDTNYEIVALKGIAVYFVMAPREREPFHQEELKIVSDLVDVLMADSPLPSDALESQFLADWNESTNDNERLRVAIDQVASLTDNSALALHSILC.

Residues 118 to 272 (RLTHTLEVAQ…MDLSDDIAYS (155 aa)) enclose the HD domain.

This sequence belongs to the dGTPase family. Type 2 subfamily.

In Bifidobacterium longum (strain NCC 2705), this protein is Deoxyguanosinetriphosphate triphosphohydrolase-like protein (dgt).